Here is a 135-residue protein sequence, read N- to C-terminus: Nitrogen fixation protein NifU 1 (135 aa).

The segment covering 1–10 (MRDMQDDDTK) has biased composition (basic and acidic residues). Residues 1 to 29 (MRDMQDDDTKSPAPPPAAAAAARRAAGQA) form a disordered region. Over residues 18-29 (AAAAARRAAGQA) the composition is skewed to low complexity.

It belongs to the NifU family.

Its function is as follows. May be involved in the formation or repair of [Fe-S] clusters present in iron-sulfur proteins. This chain is Nitrogen fixation protein NifU 1 (nifU1), found in Rhodobacter capsulatus (Rhodopseudomonas capsulata).